Reading from the N-terminus, the 296-residue chain is GTP-binding protein GEM (296 aa).

Disordered stretches follow at residues 1-20 and 37-68; these read MTLNNVTMRQGTVGMQPQQQ and PHQYSHRNRHSATPEDHCRRSWSSDSTDSVIS. Residues 57-68 show a composition bias toward low complexity; the sequence is SWSSDSTDSVIS. GTP-binding positions include 82–89 and 191–194; these read GEQGVGKS and NKSD. A calmodulin-binding region spans residues 266–285; that stretch reads ARRFWGKIVAKNNKNMAFKL.

The protein belongs to the small GTPase superfamily. RGK family. As to quaternary structure, interacts with calmodulin in a Ca(2+)-dependent manner. Binds ROCK1. Phosphorylated on tyrosine residues. In terms of tissue distribution, most abundant in thymus, spleen, kidney, lung, and testis. Less abundant in heart, brain, liver and skeletal muscle.

The protein resides in the cell membrane. Could be a regulatory protein, possibly participating in receptor-mediated signal transduction at the plasma membrane. Has guanine nucleotide-binding activity but undetectable intrinsic GTPase activity. This chain is GTP-binding protein GEM (GEM), found in Homo sapiens (Human).